Here is a 253-residue protein sequence, read N- to C-terminus: Indole-3-glycerol phosphate synthase (253 aa).

This sequence belongs to the TrpC family.

The catalysed reaction is 1-(2-carboxyphenylamino)-1-deoxy-D-ribulose 5-phosphate + H(+) = (1S,2R)-1-C-(indol-3-yl)glycerol 3-phosphate + CO2 + H2O. Its pathway is amino-acid biosynthesis; L-tryptophan biosynthesis; L-tryptophan from chorismate: step 4/5. The polypeptide is Indole-3-glycerol phosphate synthase (Bacillus cereus (strain ATCC 10987 / NRS 248)).